The following is a 341-amino-acid chain: MTPIRTNWSRDEIAALFEQPFTELLFQAATVHRAYHPPEQVQLCTLLSIKTGGCPEDCGYCSQSVKADSGVEATKLMDVQRVLQSAAQAKDAGSQRFCMGAAWRNPKDRDMPAIVEIVKGVRDMGLETCMTLGMLTPKQADMLKDAGLDYYNHNVDTGPEYYERVISTRNYQDRLDTLQNVRDAGINVCSGGIVGMGETREDRVGFVHTLATLERHPESVPVNALVPVKGTVLGDMLADTPLAKIDDIEFVRTVAVARITMPLSMVRLSAGRESMSEATQALCFMAGANSIFTGDKLLTAANAGDDKDAALFDKLGLTALQGEEPLRRAKDEAGKAAIPAE.

Residues E39 to L263 enclose the Radical SAM core domain. 3 residues coordinate [4Fe-4S] cluster: C54, C58, and C61. [2Fe-2S] cluster is bound by residues C98, C129, C189, and R267.

The protein belongs to the radical SAM superfamily. Biotin synthase family. Homodimer. It depends on [4Fe-4S] cluster as a cofactor. [2Fe-2S] cluster is required as a cofactor.

It catalyses the reaction (4R,5S)-dethiobiotin + (sulfur carrier)-SH + 2 reduced [2Fe-2S]-[ferredoxin] + 2 S-adenosyl-L-methionine = (sulfur carrier)-H + biotin + 2 5'-deoxyadenosine + 2 L-methionine + 2 oxidized [2Fe-2S]-[ferredoxin]. It participates in cofactor biosynthesis; biotin biosynthesis; biotin from 7,8-diaminononanoate: step 2/2. In terms of biological role, catalyzes the conversion of dethiobiotin (DTB) to biotin by the insertion of a sulfur atom into dethiobiotin via a radical-based mechanism. In Erythrobacter litoralis (strain HTCC2594), this protein is Biotin synthase.